Consider the following 405-residue polypeptide: Phosphoglycerate kinase (405 aa).

Substrate-binding positions include 24–26 (DFN), arginine 40, 63–66 (HLGR), arginine 122, and arginine 162. Residues lysine 213, glutamate 332, and 361-364 (GGDS) contribute to the ATP site.

The protein belongs to the phosphoglycerate kinase family. Monomer.

The protein resides in the cytoplasm. It catalyses the reaction (2R)-3-phosphoglycerate + ATP = (2R)-3-phospho-glyceroyl phosphate + ADP. The protein operates within carbohydrate degradation; glycolysis; pyruvate from D-glyceraldehyde 3-phosphate: step 2/5. The protein is Phosphoglycerate kinase of Corynebacterium diphtheriae (strain ATCC 700971 / NCTC 13129 / Biotype gravis).